A 458-amino-acid polypeptide reads, in one-letter code: NADH-quinone oxidoreductase subunit N (458 aa).

14 helical membrane-spanning segments follow: residues 4-24 (LLPE…AVII), 30-50 (IISN…FKYS), 62-82 (GINI…SMII), 94-114 (LKFE…VAIS), 118-138 (FLLL…LAGF), 153-173 (FILG…IYGF), 194-214 (LGLI…LSSV), 235-255 (FTAA…KLII), 261-281 (INYN…AFGA), 290-310 (LMAY…LLHN), 318-338 (LLYI…LIML), 361-381 (IAAI…LTGF), 397-417 (FILA…YLKV), and 438-458 (LLLI…IISF).

The protein belongs to the complex I subunit 2 family. In terms of assembly, NDH-1 is composed of 14 different subunits. Subunits NuoA, H, J, K, L, M, N constitute the membrane sector of the complex.

The protein resides in the cell inner membrane. It carries out the reaction a quinone + NADH + 5 H(+)(in) = a quinol + NAD(+) + 4 H(+)(out). Functionally, NDH-1 shuttles electrons from NADH, via FMN and iron-sulfur (Fe-S) centers, to quinones in the respiratory chain. The immediate electron acceptor for the enzyme in this species is believed to be ubiquinone. Couples the redox reaction to proton translocation (for every two electrons transferred, four hydrogen ions are translocated across the cytoplasmic membrane), and thus conserves the redox energy in a proton gradient. This is NADH-quinone oxidoreductase subunit N from Rickettsia felis (strain ATCC VR-1525 / URRWXCal2) (Rickettsia azadi).